Consider the following 310-residue polypeptide: N-acyl-aromatic-L-amino acid amidohydrolase (carboxylate-forming) (310 aa).

Zn(2+) contacts are provided by His-20 and Glu-23. Residues Arg-62 and 69–70 (NR) contribute to the substrate site. His-113 lines the Zn(2+) pocket. 2 residues coordinate substrate: Glu-176 and Tyr-286.

The protein belongs to the AspA/AstE family. Aspartoacylase subfamily. In terms of assembly, homotetramer. Zn(2+) is required as a cofactor.

It localises to the apical cell membrane. It is found in the cytoplasm. It catalyses the reaction an N-acyl-aromatic L-alpha-amino acid + H2O = an aromatic L-alpha-amino acid + a carboxylate. The catalysed reaction is an N-acetyl-L-cysteine-S-conjugate + H2O = an S-substituted L-cysteine + acetate. Plays an important role in deacetylating mercapturic acids in kidney proximal tubules. The sequence is that of N-acyl-aromatic-L-amino acid amidohydrolase (carboxylate-forming) (acy3) from Xenopus tropicalis (Western clawed frog).